A 101-amino-acid polypeptide reads, in one-letter code: Small ribosomal subunit protein uS10 (101 aa).

This sequence belongs to the universal ribosomal protein uS10 family. As to quaternary structure, part of the 30S ribosomal subunit.

Its function is as follows. Involved in the binding of tRNA to the ribosomes. This chain is Small ribosomal subunit protein uS10, found in Anaeromyxobacter dehalogenans (strain 2CP-C).